We begin with the raw amino-acid sequence, 1269 residues long: Myb-binding protein 1A-like protein (1269 aa).

Residues 708–783 are disordered; it reads DPNKDEDESG…EEDEAMEEGQ (76 aa). The segment covering 721 to 730 has biased composition (basic and acidic residues); the sequence is TDDKKRKLKE. Residues 731 to 783 show a composition bias toward acidic residues; sequence EDEDDDDEEEDDDNDEGDDDDDDDDEEEGGEEGEESSDSSDDEEEDEAMEEGQ. Phosphoserine is present on Ser-810. The interval 1163-1269 is disordered; the sequence is VKKVPEAEQT…KKKKKGADGE (107 aa). The segment covering 1177 to 1195 has biased composition (basic residues); sequence KKKKGFLPETKKRKNRKKP. Residues 1199–1211 are compositionally biased toward basic and acidic residues; the sequence is EGKETETPVEKTP. Basic residues-rich tracts occupy residues 1221-1232 and 1256-1269; these read NKNKKKNKKRKQ and KQKK…ADGE.

Belongs to the MYBBP1A family.

The protein localises to the nucleus. The protein resides in the nucleolus. Functionally, may activate or repress transcription via interactions with sequence specific DNA-binding proteins. May play a role in the repression of the circadian clock gene expression. In Danio rerio (Zebrafish), this protein is Myb-binding protein 1A-like protein (mybbp1a).